The primary structure comprises 131 residues: Protein Turandot M (131 aa).

The N-terminal stretch at 1–23 is a signal peptide; that stretch reads MNPAIYLSCLVVFSLLLLGKVNA.

This sequence belongs to the Turandot family.

Its subcellular location is the secreted. A humoral factor that may play a role in stress tolerance. Requires Mekk1 expression in the fat body to regulate response to septic injury and consequent immune response. The polypeptide is Protein Turandot M (Drosophila erecta (Fruit fly)).